The chain runs to 1108 residues: MSITNGTSRSVSAMGHPAVERYTPGHIVCVGTHKVEVVNYLAEGGFAQIYVVKFLEYLNEFDNTASVPLKIGDVACLKRVLVQDENGLNEMRNEVEVMKKLKGAPNIVQYFDSNASRRRDGVQGFEVLLLMELCPNKSLLDYMNQRLSTKLTEAEIVKIMYDVALSISQMHYLPVSLIHRDIKIENVLVDAKNNFKLADFGSTSTCFPIVTTHQDIALLTQNIYVHTTPQYRSPEMIDLYRCLPINEKSDIWALGVFLYKLLFFTTPFEMTGQFAILHSKYEFPVNKYSSKLINLIIIMLAENPNLRPNIYQVLYHLCEILNVEVPIEDKYAEGAYNFSKYTQFQNKLQNVQLQMYQLQQKKIMQNNKLSDSEENLLNDMFLSSFEISSKLPMNASDGHAAVSRIPSQNVGQELEEEKESQSDQRKSTLSEDKSSRTTSNANSSGTANNPQEINTIQSPGIEDKSIFENKTPGELYYPSVSELDTYLDKELVKQSSDPTISEQSPRLNTQSLPQRQKSTSSYSSGGRSMKSTSYGAATIGSDEALANEKTAGINKMKQHKSNNPFPKMNVAYHSTNELSNDASNFFLEEQQQGQRYQQAQNQTGTQGNTFPDESQYQSRVEQQQQQQDQPKGPANYSQRNFYTGRDRSNKPMQLGGTIAGDSGNRRVNFQNISQNYATNSQSGYLPSQNSPAIPMVRPVISMNQQQAQQIQAQQLQAQQMQAKQQMQAKQQMQVQQQLQVQQQMQIQNANNNGTYVSDRTNHTTEDMRNAQGGEPPILAGNSANEPMHSSSKNEALLIELSPLKEDAGKQSFQDTNEPQTGGIEDAGGSGTIKGSNNNRNGVLNLSLNEMDLSRDDTGAAVSSFSSSSSSASIQQAKLSGRKGSSKRNNYSTDELGDSMVSSESIDIDLDDARRGKTAERRPLHNERGHKDQARSSDASKSNQFKSKDFSSVSTRQPRQSLDLNFQEVNLSSPTLTQEHRNKNDSPAPNSHHSYRVSPHASTAITENKRHSTGHELSTRSNGKHETHRTGSKQRHDLERYRHSKDKDSNSSITISTSTPSEMRKSFARARQSLDLERVRREAMASSASSSGGSNGKRRSFFSVFRSEK.

S2 is modified (N-acetylserine). At S10 the chain carries Phosphoserine. Positions V35–E319 constitute a Protein kinase domain. Residues L41 to I49 and K70 contribute to the ATP site. The active-site Proton acceptor is D181. A disordered region spans residues I405–I466. Position 407 is a phosphoserine (S407). Residues E419–S435 are compositionally biased toward basic and acidic residues. Residues R436–N449 show a composition bias toward low complexity. The residue at position 471 (T471) is a Phosphothreonine. Residues K493–P513 show a composition bias toward polar residues. A disordered region spans residues K493–Y534. S504 is subject to Phosphoserine. The segment covering Q514–Y534 has biased composition (low complexity). A phosphoserine mark is found at S541 and S574. Residues Q590–Q629 show a composition bias toward low complexity. Disordered regions lie at residues Q590 to G663 and E765 to S791. The segment covering N781 to S791 has biased composition (polar residues). S801 bears the Phosphoserine mark. The interval A807–N838 is disordered. Residues Q810–Q819 are compositionally biased toward polar residues. Position 846 is a phosphoserine (S846). A disordered region spans residues G858–K1108. Positions A859–S872 are enriched in low complexity. The segment covering D910 to R934 has biased composition (basic and acidic residues). Polar residues predominate over residues S935 to T976. 2 positions are modified to phosphoserine: S953 and S960. A compositionally biased stretch (basic and acidic residues) spans E1006 to S1048. Glycyl lysine isopeptide (Lys-Gly) (interchain with G-Cter in ubiquitin) cross-links involve residues K1008 and K1046. S1048 carries the phosphoserine modification. Residues N1049 to S1060 show a composition bias toward low complexity. Basic and acidic residues predominate over residues Q1071 to A1082. The residue at position 1072 (S1072) is a Phosphoserine.

Belongs to the protein kinase superfamily. Ser/Thr protein kinase family.

It carries out the reaction L-seryl-[protein] + ATP = O-phospho-L-seryl-[protein] + ADP + H(+). The enzyme catalyses L-threonyl-[protein] + ATP = O-phospho-L-threonyl-[protein] + ADP + H(+). Functionally, phosphorylates SCD5. The sequence is that of Serine/threonine-protein kinase AKL1 (AKL1) from Saccharomyces cerevisiae (strain ATCC 204508 / S288c) (Baker's yeast).